A 242-amino-acid chain; its full sequence is uncharacterized protein (242 aa).

Residues 57–67 (SPTSQKTSASG) are compositionally biased toward polar residues. Residues 57 to 78 (SPTSQKTSASGQEEPDPLHDKS) are disordered. The 113-residue stretch at 76 to 188 (DKSSGLIQRF…GYMSTPPPVK (113 aa)) folds into the DUF1279 domain. The helical transmembrane segment at 92-114 (YGKVMIPVHLLTSTMWFGTFYYA) threads the bilayer. The stretch at 188–237 (KEYLQEKMEETKERISGKMEETKDRFSERMEETKDKFNEKLQETKDKVSF) forms a coiled coil. Residues 198 to 236 (TKERISGKMEETKDRFSERMEETKDKFNEKLQETKDKVS) are compositionally biased toward basic and acidic residues. The interval 198-242 (TKERISGKMEETKDRFSERMEETKDKFNEKLQETKDKVSFRKKKE) is disordered.

It is found in the membrane. This is an uncharacterized protein from Danio rerio (Zebrafish).